The chain runs to 292 residues: Phosphatidylserine decarboxylase proenzyme (292 aa).

Catalysis depends on charge relay system; for autoendoproteolytic cleavage activity residues Asp-89, His-146, and Ser-252. Ser-252 acts as the Schiff-base intermediate with substrate; via pyruvic acid; for decarboxylase activity in catalysis. A Pyruvic acid (Ser); by autocatalysis modification is found at Ser-252.

The protein belongs to the phosphatidylserine decarboxylase family. PSD-B subfamily. Prokaryotic type I sub-subfamily. As to quaternary structure, heterodimer of a large membrane-associated beta subunit and a small pyruvoyl-containing alpha subunit. Pyruvate is required as a cofactor. Post-translationally, is synthesized initially as an inactive proenzyme. Formation of the active enzyme involves a self-maturation process in which the active site pyruvoyl group is generated from an internal serine residue via an autocatalytic post-translational modification. Two non-identical subunits are generated from the proenzyme in this reaction, and the pyruvate is formed at the N-terminus of the alpha chain, which is derived from the carboxyl end of the proenzyme. The autoendoproteolytic cleavage occurs by a canonical serine protease mechanism, in which the side chain hydroxyl group of the serine supplies its oxygen atom to form the C-terminus of the beta chain, while the remainder of the serine residue undergoes an oxidative deamination to produce ammonia and the pyruvoyl prosthetic group on the alpha chain. During this reaction, the Ser that is part of the protease active site of the proenzyme becomes the pyruvoyl prosthetic group, which constitutes an essential element of the active site of the mature decarboxylase.

The protein resides in the cell membrane. It carries out the reaction a 1,2-diacyl-sn-glycero-3-phospho-L-serine + H(+) = a 1,2-diacyl-sn-glycero-3-phosphoethanolamine + CO2. Its pathway is phospholipid metabolism; phosphatidylethanolamine biosynthesis; phosphatidylethanolamine from CDP-diacylglycerol: step 2/2. Catalyzes the formation of phosphatidylethanolamine (PtdEtn) from phosphatidylserine (PtdSer). The protein is Phosphatidylserine decarboxylase proenzyme of Shewanella sp. (strain ANA-3).